The sequence spans 120 residues: Transcription elongation factor SPT4 (120 aa).

The segment at 1–39 is interaction with spt-5; sequence MAASIPSDLRNLRACLLCSLIKSVDAFQTDGCENCDEVL. The segment at 15-35 adopts a C4-type zinc-finger fold; the sequence is CLLCSLIKSVDAFQTDGCENC.

Belongs to the SPT4 family. In terms of assembly, interacts with spt-5 to form DSIF. DSIF interacts with RNA polymerase II and with the positive transcription elongation factor b complex (P-TEFb complex), which is composed of cdk-9 and cyclin-T.

It is found in the nucleus. Its function is as follows. May function as a component of the DRB sensitivity-inducing factor complex (DSIF complex), which regulates transcription elongation by RNA polymerase II. DSIF may enhance transcriptional pausing at sites proximal to the promoter, which may in turn facilitate the assembly of an elongation competent RNA polymerase II complex. The sequence is that of Transcription elongation factor SPT4 (spt-4) from Caenorhabditis briggsae.